Here is a 1270-residue protein sequence, read N- to C-terminus: DNA-directed RNA polymerase subunit beta (1270 aa).

Belongs to the RNA polymerase beta chain family. In terms of assembly, the RNAP catalytic core consists of 2 alpha, 1 beta, 1 beta' and 1 omega subunit. When a sigma factor is associated with the core the holoenzyme is formed, which can initiate transcription.

The catalysed reaction is RNA(n) + a ribonucleoside 5'-triphosphate = RNA(n+1) + diphosphate. DNA-dependent RNA polymerase catalyzes the transcription of DNA into RNA using the four ribonucleoside triphosphates as substrates. In Phocaeicola vulgatus (strain ATCC 8482 / DSM 1447 / JCM 5826 / CCUG 4940 / NBRC 14291 / NCTC 11154) (Bacteroides vulgatus), this protein is DNA-directed RNA polymerase subunit beta.